The sequence spans 66 residues: Clusterin (66 aa).

The protein belongs to the clusterin family. Antiparallel disulfide-linked heterodimer of an alpha chain and a beta chain. Self-associates and forms higher oligomers. Interacts with a broad range of misfolded proteins, including APP, APOC2 and LYZ. Slightly acidic pH promotes interaction with misfolded proteins. Forms high-molecular weight oligomers upon interaction with misfolded proteins. Interacts with APOA1, LRP2, CLUAP1 and PON1. Interacts with the complement membrane attack complex. Interacts (via alpha chain) with XRCC6. Interacts with SYVN1, COMMD1, BTRC, CUL1 and with ubiquitin and SCF (SKP1-CUL1-F-box protein) E3 ubiquitin-protein ligase complexes. Interacts (via alpha chain) with BAX in stressed cells, where BAX undergoes a conformation change leading to association with the mitochondrial membrane. Does not interact with BAX in unstressed cells. Found in a complex with LTF, CLU, EPPIN and SEMG1. Interacts (immaturely glycosylated pre-secreted form) with HSPA5; this interaction promotes CLU stability and facilitates stress-induced CLU retrotranslocation from the secretory pathway to the mitochondria, thereby reducing stress-induced apoptosis by stabilizing mitochondrial membrane integrity. Interacts with BCL2L1; this interaction releases and activates BAX and promotes cell death. Interacts with TGFBR2 and ACVR1. Interacts (secreted form) with STMN3; this interaction may act as an important modulator during neuronal differentiation. Component of a epididymal complex at least composed of soluble form of prion protein PRNP, CLU, BPI, CES5A, MANBA and GLB1. In terms of processing, proteolytically cleaved on its way through the secretory system, probably within the Golgi lumen. Proteolytic cleavage is not necessary for its chaperone activity. All non-secreted forms are not proteolytically cleaved. Chaperone activity of uncleaved forms is dependent on a non-reducing environment. Post-translationally, polyubiquitinated, leading to proteasomal degradation. Under cellular stress, the intracellular level of cleaved form is reduced due to proteasomal degradation. Heavily N-glycosylated. About 30% of the protein mass is comprised of complex N-linked carbohydrate. Endoplasmic reticulum (ER) stress induces changes in glycosylation status and increases level of hypoglycosylated forms. Core carbohydrates are essential for chaperone activity. Non-secreted forms are hypoglycosylated or unglycosylated.

Its subcellular location is the secreted. The protein resides in the nucleus. It is found in the cytoplasm. It localises to the mitochondrion membrane. The protein localises to the cytosol. Its subcellular location is the microsome. The protein resides in the endoplasmic reticulum. It is found in the mitochondrion. It localises to the perinuclear region. The protein localises to the cytoplasmic vesicle. Its subcellular location is the secretory vesicle. The protein resides in the chromaffin granule. Functionally, functions as extracellular chaperone that prevents aggregation of non native proteins. Prevents stress-induced aggregation of blood plasma proteins. Inhibits formation of amyloid fibrils by APP, APOC2, B2M, CALCA, CSN3, SNCA and aggregation-prone LYZ variants (in vitro). Does not require ATP. Maintains partially unfolded proteins in a state appropriate for subsequent refolding by other chaperones, such as HSPA8/HSC70. Does not refold proteins by itself. Binding to cell surface receptors triggers internalization of the chaperone-client complex and subsequent lysosomal or proteasomal degradation. When secreted, protects cells against apoptosis and against cytolysis by complement: inhibits assembly of the complement membrane attack complex (MAC) by preventing polymerization of C9 pore component of the MAC complex. Intracellular forms interact with ubiquitin and SCF (SKP1-CUL1-F-box protein) E3 ubiquitin-protein ligase complexes and promote the ubiquitination and subsequent proteasomal degradation of target proteins. Promotes proteasomal degradation of COMMD1 and IKBKB. Modulates NF-kappa-B transcriptional activity. Following stress, promotes apoptosis. Inhibits apoptosis when associated with the mitochondrial membrane by interference with BAX-dependent release of cytochrome c into the cytoplasm. Plays a role in the regulation of cell proliferation. An intracellular form suppresses stress-induced apoptosis by stabilizing mitochondrial membrane integrity through interaction with HSPA5. Secreted form does not affect caspase or BAX-mediated intrinsic apoptosis and TNF-induced NF-kappa-B-activity. Secreted form act as an important modulator during neuronal differentiation through interaction with STMN3. Plays a role in the clearance of immune complexes that arise during cell injury. This chain is Clusterin (CLU), found in Ovis aries (Sheep).